Here is a 634-residue protein sequence, read N- to C-terminus: MWLQQRLKGLPGLLSSSWARRLLCLLGLLVLLLWFASSGARRAAGGLHLPSWARSEPGAAEPSACLEAATRAWRGLRDRGEAVPLGPGVPALVANGFLALDASNNRLWVTPGEREPAVTPDFVPFVQLRPLNVVAEAGEAVLLLREGLLRRVRCLQLGTPGSGPAAGVPGPASASGLSAGSGRDCVLLQEDFLAHRGRPHVYLQRIQLNNPTERVAALQTVGPTAGPVPKSFTSTLEKVGDHQFLLYSGRSTPLPSGLVHLVVVTSKKLVNRLQVAPKTQLDETVLWVVHISGPIHPQVLKSKGAKELKALQDLARKEMLELLEMPASELLQDHQYLWAQLFSPGVEMKRITDAHTPSGLTVNLTLYYMLSCSPAPLLSPSLSHREREQMEATLNYEDHCFSGHATMHAENLWPGQLSSVQQILQLADLWKLTLQKRGCKGLVKVGAPGILQGMVLSFGGLQFTENHLQFQADPEVLHNSYALHGIRYKNDHINLAVLVDAEGKPYLHVSLESRGQPVKIYACEAGCLHDPVELTSEPGGHTFSVMVTQPITPLLYISTDLTHLQDLRHTLHLKAILAHDEHMAQQDPGLPFLFWFSVASLITLFHLFLFKLIYNEYCGPGAKPLFRSKEDPSV.

The N-terminal stretch at 1 to 40 (MWLQQRLKGLPGLLSSSWARRLLCLLGLLVLLLWFASSGA) is a signal peptide. Residues 41–589 (RRAAGGLHLP…DEHMAQQDPG (549 aa)) lie on the Extracellular side of the membrane. N-linked (GlcNAc...) asparagine glycosylation is present at Asn363. The helical transmembrane segment at 590 to 610 (LPFLFWFSVASLITLFHLFLF) threads the bilayer. The Cytoplasmic segment spans residues 611-634 (KLIYNEYCGPGAKPLFRSKEDPSV).

It localises to the membrane. This is an uncharacterized protein from Mus musculus (Mouse).